A 602-amino-acid chain; its full sequence is MKPYKIENIRNFSIIAHIDHGKSTIADRLLESTSTIEQREMREQLLDSMDLERERGITIKAHPVTMTYEYEGETYELNLIDTPGHVDFSYEVSRSLAACEGALLIVDAAQGVQAQSLANVYLALERDLEIIPVLNKIDLPAAQPEAIKKQIEEFIGLDTSNTIACSAKTGQGIPEILESIIRLVPPPKPPQETELKALIFDSHYDPYVGIMVYVRVISGEIKKGDRITFMATKGSSFEVLGIGAFLPEATLMEGSLRAGQVGYFIANLKKVKDVKIGDTVTTVKHPAKEPLEGFKEIKPVVFAGIYPIDSSDFDTLKDALGRLQLNDSALTIEQESSHSLGFGFRCGFLGLLHLEIIFERISREFDLDIIATAPSVIYKVVLKNGKTLFIDNPTAYPDPALIEHMEEPWVHVNIITPQEYLSNIMSLCMDKRGICLKTDMLDQHRLVLSYELPLNEIVSDFNDKLKSVTKGYGSFDYRLGDYKKGAIIKLEILINDEAVDAFSCLVHRDKAESKGRSICEKLVDVIPPQLFKIPIQAAINKKIIARETIRALAKNVTAKCYGGDITRKRKLWDKQKKGKKRMKEFGKVSIPNTAFVAVLKME.

The 182-residue stretch at glutamate 7 to lysine 188 folds into the tr-type G domain. GTP contacts are provided by residues aspartate 19–threonine 24 and asparagine 135–aspartate 138.

It belongs to the TRAFAC class translation factor GTPase superfamily. Classic translation factor GTPase family. LepA subfamily.

The protein resides in the cell inner membrane. The catalysed reaction is GTP + H2O = GDP + phosphate + H(+). In terms of biological role, required for accurate and efficient protein synthesis under certain stress conditions. May act as a fidelity factor of the translation reaction, by catalyzing a one-codon backward translocation of tRNAs on improperly translocated ribosomes. Back-translocation proceeds from a post-translocation (POST) complex to a pre-translocation (PRE) complex, thus giving elongation factor G a second chance to translocate the tRNAs correctly. Binds to ribosomes in a GTP-dependent manner. The polypeptide is Elongation factor 4 (Chlamydia trachomatis serovar A (strain ATCC VR-571B / DSM 19440 / HAR-13)).